A 253-amino-acid chain; its full sequence is U2 small nuclear ribonucleoprotein A' (253 aa).

LRR repeat units follow at residues 19-40, 41-62, 63-84, and 87-108; these read KDRE…GIAK, DQDA…PFFP, RLHT…IAST, and NLTT…DPLR. In terms of domain architecture, LRRCT spans 121–159; it reads NPVTRKEHYRYWVIWRIPSVRFLDYQKVKDAERAKAKEL. Residues 228–253 are disordered; it reads ELNEGRIPGGALDAGEDSEDENQMQT. The span at 241-253 shows a compositional bias: acidic residues; that stretch reads AGEDSEDENQMQT.

The protein belongs to the U2 small nuclear ribonucleoprotein A family. Associated with the spliceosome.

The protein localises to the nucleus. Its function is as follows. Involved in pre-mRNA splicing. The sequence is that of U2 small nuclear ribonucleoprotein A' (lea1) from Aspergillus fumigatus (strain ATCC MYA-4609 / CBS 101355 / FGSC A1100 / Af293) (Neosartorya fumigata).